Here is a 553-residue protein sequence, read N- to C-terminus: Major facilitator-type transporter hxnZ (553 aa).

Transmembrane regions (helical) follow at residues 89-109 (FTVA…ISAV), 128-148 (VAYY…SDLI), 152-172 (PAFN…AGTS), 174-194 (FIAF…NVVC), and 213-233 (ALSG…WVFL). N-linked (GlcNAc...) asparagine glycosylation is present at N235. 7 helical membrane passes run 257–277 (YTLI…IFVF), 366–386 (ALIW…FNFL), 409–429 (IQSA…NTFL), 433–453 (WMMG…VGVK), 459–481 (LAFS…YAIM), 496–516 (TASG…SLIA), and 525–545 (PIYA…GLPF).

The protein belongs to the major facilitator superfamily.

The protein localises to the cell membrane. Major facilitator-type transporter, part of the hnx cluster involved in the purine degradation. The nicotinate hydroxylase hnxS accepts nicotinate as a substrate and catalyzes the first step of nicotinate catabolism. The major facilitator-type transporters hxnP and hxnZ are probably involved in the uptake of nicotinate-derived metabolites, and the oxidoreductases hxnT and hxnY in the further metabolism of 6-OH nicotinic acid. This Emericella nidulans (strain FGSC A4 / ATCC 38163 / CBS 112.46 / NRRL 194 / M139) (Aspergillus nidulans) protein is Major facilitator-type transporter hxnZ.